The primary structure comprises 655 residues: Acetyl-coenzyme A synthetase (655 aa).

Residues 196 to 199 (RGGK) and threonine 316 each bind CoA. Residues 392–394 (GEP), 416–421 (DTWWQT), aspartate 507, and arginine 522 contribute to the ATP site. Residue serine 530 participates in CoA binding. ATP is bound at residue arginine 533. Mg(2+) is bound by residues valine 544 and valine 549. Position 619 is an N6-acetyllysine (lysine 619).

The protein belongs to the ATP-dependent AMP-binding enzyme family. Requires Mg(2+) as cofactor. Acetylated. Deacetylation by the SIR2-homolog deacetylase activates the enzyme.

The enzyme catalyses acetate + ATP + CoA = acetyl-CoA + AMP + diphosphate. Its function is as follows. Catalyzes the conversion of acetate into acetyl-CoA (AcCoA), an essential intermediate at the junction of anabolic and catabolic pathways. AcsA undergoes a two-step reaction. In the first half reaction, AcsA combines acetate with ATP to form acetyl-adenylate (AcAMP) intermediate. In the second half reaction, it can then transfer the acetyl group from AcAMP to the sulfhydryl group of CoA, forming the product AcCoA. In Thiobacillus denitrificans (strain ATCC 25259 / T1), this protein is Acetyl-coenzyme A synthetase.